Reading from the N-terminus, the 350-residue chain is Phosphotriesterase-related protein (350 aa).

A divalent metal cation contacts are provided by H22, H24, E169, H201, H230, and D298.

The protein belongs to the metallo-dependent hydrolases superfamily. Phosphotriesterase family. A divalent metal cation serves as cofactor.

In Drosophila sechellia (Fruit fly), this protein is Phosphotriesterase-related protein.